The chain runs to 222 residues: MPSLSKEAALVHDALVARGLETPLRPPMDELDNETRKSLIAGHMTEIMQLLNLDLSDDSLMETPHRIAKMYVDEIFAGLDYANFPKITLIENKMKVDEMVTVRDITLTSTCEHHFVTIDGKATVAYIPKDSVIGLSKINRIVQFFAQRPQVQERLTQQILTALQTLLGTNNVAVSIDAVHYCVKARGIRDATSATTTTSLGGLFKSSQNTRQEFLRAVRHHP.

Residues cysteine 111, histidine 114, and cysteine 182 each contribute to the Zn(2+) site.

The protein belongs to the GTP cyclohydrolase I family. Toroid-shaped homodecamer, composed of two pentamers of five dimers.

It catalyses the reaction GTP + H2O = 7,8-dihydroneopterin 3'-triphosphate + formate + H(+). Its pathway is cofactor biosynthesis; 7,8-dihydroneopterin triphosphate biosynthesis; 7,8-dihydroneopterin triphosphate from GTP: step 1/1. Allosteric enzyme. Activity is modulated by K(+), divalent cations, UTP, and tetrahydrobiopterin. Tetrahydrobiopterin is an inhibitor of this enzyme. In Salmonella typhi, this protein is GTP cyclohydrolase 1.